Consider the following 304-residue polypeptide: ADP-polyphosphate phosphotransferase (304 aa).

It belongs to the polyphosphate kinase 2 (PPK2) family. Class I subfamily.

The catalysed reaction is [phosphate](n) + ATP = [phosphate](n+1) + ADP. In terms of biological role, uses inorganic polyphosphate (polyP) as a donor to convert ADP to ATP. The chain is ADP-polyphosphate phosphotransferase from Pseudomonas aeruginosa (strain ATCC 15692 / DSM 22644 / CIP 104116 / JCM 14847 / LMG 12228 / 1C / PRS 101 / PAO1).